The primary structure comprises 202 residues: MADS-box transcription factor 33 (202 aa).

Residues 1–61 enclose the MADS-box domain; the sequence is MVRGKVQMRR…GKLHELATNG (61 aa). Positions 87-177 constitute a K-box domain; it reads QQVAEQGIFL…QEKVKEQQKL (91 aa).

As to expression, expressed in seedling roots.

The protein localises to the nucleus. In terms of biological role, probable transcription factor. This chain is MADS-box transcription factor 33 (MADS33), found in Oryza sativa subsp. japonica (Rice).